The following is a 706-amino-acid chain: Glutamine-dependent NAD(+) synthetase (706 aa).

One can recognise a CN hydrolase domain in the interval 5–275 (VTVATCALNQ…VEVLTATLDL (271 aa)). Glu-45 acts as the Proton acceptor; for glutaminase activity in catalysis. Residue Lys-114 is the For glutaminase activity of the active site. Residue Cys-175 is the Nucleophile; for glutaminase activity of the active site. The interval 325–706 (YHSPAEEISL…RQRQELDGVD (382 aa)) is ligase. 355–362 (PLSGGVDS) provides a ligand contact to ATP. The active site involves Ser-357.

It in the C-terminal section; belongs to the NAD synthetase family. In terms of assembly, homohexamer.

It carries out the reaction deamido-NAD(+) + L-glutamine + ATP + H2O = L-glutamate + AMP + diphosphate + NAD(+) + H(+). It participates in cofactor biosynthesis; NAD(+) biosynthesis; NAD(+) from deamido-NAD(+) (L-Gln route): step 1/1. Its function is as follows. Catalyzes the ATP-dependent amidation of deamido-NAD to form NAD. Uses L-glutamine as a nitrogen source. The polypeptide is Glutamine-dependent NAD(+) synthetase (NADSYN1) (Bos taurus (Bovine)).